A 129-amino-acid chain; its full sequence is Large ribosomal subunit protein bL12 (129 aa).

The protein belongs to the bacterial ribosomal protein bL12 family. Homodimer. Part of the ribosomal stalk of the 50S ribosomal subunit. Forms a multimeric L10(L12)X complex, where L10 forms an elongated spine to which 2 to 4 L12 dimers bind in a sequential fashion. Binds GTP-bound translation factors.

In terms of biological role, forms part of the ribosomal stalk which helps the ribosome interact with GTP-bound translation factors. Is thus essential for accurate translation. This Mycobacteroides abscessus (strain ATCC 19977 / DSM 44196 / CCUG 20993 / CIP 104536 / JCM 13569 / NCTC 13031 / TMC 1543 / L948) (Mycobacterium abscessus) protein is Large ribosomal subunit protein bL12.